The following is an 84-amino-acid chain: Small ribosomal subunit protein uS17 (84 aa).

The protein belongs to the universal ribosomal protein uS17 family. Part of the 30S ribosomal subunit.

Its function is as follows. One of the primary rRNA binding proteins, it binds specifically to the 5'-end of 16S ribosomal RNA. This Aliivibrio salmonicida (strain LFI1238) (Vibrio salmonicida (strain LFI1238)) protein is Small ribosomal subunit protein uS17.